A 96-amino-acid chain; its full sequence is Protein RnfH (96 aa).

It belongs to the UPF0125 (RnfH) family.

The chain is Protein RnfH from Psychromonas ingrahamii (strain DSM 17664 / CCUG 51855 / 37).